Reading from the N-terminus, the 730-residue chain is Catalase-peroxidase 1 (730 aa).

Residues 92-217 (WHSAGTYRTT…LGAAVMGLIY (126 aa)) constitute a cross-link (tryptophyl-tyrosyl-methioninium (Trp-Tyr) (with M-243)). Residue histidine 93 is the Proton acceptor of the active site. The tryptophyl-tyrosyl-methioninium (Tyr-Met) (with W-92) cross-link spans 217–243 (YVDPEGPNGNPDPLASAENIRESFGRM). Position 258 (histidine 258) interacts with heme b.

This sequence belongs to the peroxidase family. Peroxidase/catalase subfamily. As to quaternary structure, homodimer or homotetramer. Heme b serves as cofactor. In terms of processing, formation of the three residue Trp-Tyr-Met cross-link is important for the catalase, but not the peroxidase activity of the enzyme.

The enzyme catalyses H2O2 + AH2 = A + 2 H2O. The catalysed reaction is 2 H2O2 = O2 + 2 H2O. Bifunctional enzyme with both catalase and broad-spectrum peroxidase activity. The sequence is that of Catalase-peroxidase 1 from Haloarcula marismortui (strain ATCC 43049 / DSM 3752 / JCM 8966 / VKM B-1809) (Halobacterium marismortui).